Reading from the N-terminus, the 212-residue chain is MKMMSTRALALGAAAVLAFAAATAHAQRCGEQGSNMECPNNLCCSQYGYCGMGGDYCGKGCQNGACYTSKRCGTQAGGKTCPNNHCCSQWGYCGFGAEYCGAGCQGGPCRADIKCGSQAGGKLCPNNLCCSQWGYCGLGSEFCGEGCQGGACSTDKPCGKAAGGKVCTNNYCCSKWGSCGIGPGYCGAGCQSGGCDGVFAEAIAANSTLVAE.

The signal sequence occupies residues 1 to 26 (MKMMSTRALALGAAAVLAFAAATAHA). The residue at position 27 (Gln-27) is a Pyrrolidone carboxylic acid. Chitin-binding type-1 domains are found at residues 27–68 (QRCG…ACYT), 69–111 (SKRC…PCRA), 112–154 (DIKC…ACST), and 155–197 (DKPC…GCDG). 16 cysteine pairs are disulfide-bonded: Cys-29–Cys-44, Cys-38–Cys-50, Cys-43–Cys-57, Cys-61–Cys-66, Cys-72–Cys-87, Cys-81–Cys-93, Cys-86–Cys-100, Cys-104–Cys-109, Cys-115–Cys-130, Cys-124–Cys-136, Cys-129–Cys-143, Cys-147–Cys-152, Cys-158–Cys-173, Cys-167–Cys-179, Cys-172–Cys-186, and Cys-190–Cys-195. 36–38 (MEC) provides a ligand contact to substrate. Substrate is bound at residue 88 to 99 (SQWGYCGFGAEY). 140-141 (SE) is a substrate binding site. N-linked (GlcNAc...) asparagine glycosylation occurs at Asn-206.

In roots.

Its function is as follows. Carbohydrate binding. The sequence is that of Root-specific lectin from Hordeum vulgare (Barley).